Consider the following 125-residue polypeptide: Small ribosomal subunit protein uS12m (125 aa).

The protein belongs to the universal ribosomal protein uS12 family. In terms of assembly, component of the mitochondrial ribosome small subunit.

It is found in the mitochondrion. Functionally, protein S12 is involved in the translation initiation step. In Arabidopsis thaliana (Mouse-ear cress), this protein is Small ribosomal subunit protein uS12m (RPS12).